A 712-amino-acid chain; its full sequence is NURS complex subunit red1 (712 aa).

Positions 1 to 22 are enriched in basic and acidic residues; it reads MSRSINLDELRKKALESKKKNE. 3 disordered regions span residues 1-71, 107-195, and 323-348; these read MSRS…DRFP, NKTF…TTNQ, and DDFSNSKIEQSNLEKPPSNSENGLTM. Residues 5–32 are a coiled coil; the sequence is INLDELRKKALESKKKNEEDESNDSDKE. Residues 23 to 42 are compositionally biased toward acidic residues; it reads EDESNDSDKEDGEISEDDPV. Over residues 130 to 141 the composition is skewed to low complexity; that stretch reads SETSDSSNTSQS. Composition is skewed to polar residues over residues 178–193 and 327–348; these read FLSTSKNSDANYSKTT and NSKIEQSNLEKPPSNSENGLTM. The stretch at 351–379 forms a coiled coil; that stretch reads SDYLALLRNKEEEIRRMTKLILRLESNKK. The segment at 428-447 is disordered; it reads PSISSSGASSSAATTNSDTT. A coiled-coil region spans residues 471–501; the sequence is AQIKKSEIDILNNLIEKEEGELTKYQTLVKS. Positions 545–567 are enriched in polar residues; sequence QADENSSQILSSKTSNAPNGTTE. Residues 545–568 form a disordered region; sequence QADENSSQILSSKTSNAPNGTTET. A C3H1-type zinc finger spans residues 618–639; the sequence is FCKYETTGGVCNDDHCEASHFR.

Interacts with mmi1, pla1 and rrp6.

It is found in the nucleus. Functionally, promotes the exosome-mediated degradation of mRNAs containing a DSR (determinant of selective removal) signal sequence from mitotic cells. In Schizosaccharomyces pombe (strain 972 / ATCC 24843) (Fission yeast), this protein is NURS complex subunit red1.